A 207-amino-acid polypeptide reads, in one-letter code: Dephospho-CoA kinase (207 aa).

One can recognise a DPCK domain in the interval 12-207 (LIGITGMIGG…LYSTLLGKML (196 aa)). An ATP-binding site is contributed by 20–25 (GGGKST).

This sequence belongs to the CoaE family.

It is found in the cytoplasm. It carries out the reaction 3'-dephospho-CoA + ATP = ADP + CoA + H(+). Its pathway is cofactor biosynthesis; coenzyme A biosynthesis; CoA from (R)-pantothenate: step 5/5. In terms of biological role, catalyzes the phosphorylation of the 3'-hydroxyl group of dephosphocoenzyme A to form coenzyme A. The polypeptide is Dephospho-CoA kinase (Leptospira interrogans serogroup Icterohaemorrhagiae serovar copenhageni (strain Fiocruz L1-130)).